We begin with the raw amino-acid sequence, 317 residues long: MDGGGRFVFAVTGKKSTAKKREQYAATANADDRRVLPRPLRRFVRFGVSLATGRIHIPAHTGTISAVAFYAMIGLYGMSLGGHTNIVTQTTTSAAGFAVEDVKVSGNLQTSEIEVFQLLGLDGSTSLIALDIDAARRKLVQLPWVEDVDIRKVYPKTVEVRLKERQAFGIWQHGTELSLIEKSGSVIAPLRDNKFAALPLFVGRDAETGAAGFVAQLADWPEIRNRVRAYVRIAGRRWDLHLDNGIVVKLPEENLPQALQLLARLDLEEKVLSRDVAAVDLRLTDRTTIQLTEGAAERRQTAVDARTKALKKAEKNT.

Topologically, residues 1–63 (MDGGGRFVFA…RIHIPAHTGT (63 aa)) are cytoplasmic. Residues 64–82 (ISAVAFYAMIGLYGMSLGG) traverse the membrane as a helical segment. Over 83-317 (HTNIVTQTTT…KALKKAEKNT (235 aa)) the chain is Periplasmic. The POTRA domain occupies 97–165 (FAVEDVKVSG…KTVEVRLKER (69 aa)).

It belongs to the FtsQ/DivIB family. FtsQ subfamily.

The protein localises to the cell inner membrane. Essential cell division protein. The sequence is that of Cell division protein FtsQ from Agrobacterium fabrum (strain C58 / ATCC 33970) (Agrobacterium tumefaciens (strain C58)).